The following is a 428-amino-acid chain: 3-phosphoshikimate 1-carboxyvinyltransferase (428 aa).

Lys22, Ser23, and Arg27 together coordinate 3-phosphoshikimate. Residue Lys22 participates in phosphoenolpyruvate binding. Phosphoenolpyruvate contacts are provided by Gly96 and Arg124. 3-phosphoshikimate contacts are provided by Ser169, Ser170, Gln171, Ser197, Asp313, Asn336, and Lys340. Residue Gln171 coordinates phosphoenolpyruvate. Residue Asp313 is the Proton acceptor of the active site. Phosphoenolpyruvate-binding residues include Arg344, Arg386, and Lys411.

It belongs to the EPSP synthase family. In terms of assembly, monomer.

It is found in the cytoplasm. The enzyme catalyses 3-phosphoshikimate + phosphoenolpyruvate = 5-O-(1-carboxyvinyl)-3-phosphoshikimate + phosphate. It participates in metabolic intermediate biosynthesis; chorismate biosynthesis; chorismate from D-erythrose 4-phosphate and phosphoenolpyruvate: step 6/7. In terms of biological role, catalyzes the transfer of the enolpyruvyl moiety of phosphoenolpyruvate (PEP) to the 5-hydroxyl of shikimate-3-phosphate (S3P) to produce enolpyruvyl shikimate-3-phosphate and inorganic phosphate. The sequence is that of 3-phosphoshikimate 1-carboxyvinyltransferase from Xenorhabdus nematophila (strain ATCC 19061 / DSM 3370 / CCUG 14189 / LMG 1036 / NCIMB 9965 / AN6).